Reading from the N-terminus, the 371-residue chain is tRNA-specific 2-thiouridylase MnmA (371 aa).

Residues 16–23 (GMSGGVDS) and Met42 contribute to the ATP site. Residues 102-104 (NPD) are interaction with target base in tRNA. Catalysis depends on Cys107, which acts as the Nucleophile. A disulfide bridge connects residues Cys107 and Cys204. Position 132 (Gly132) interacts with ATP. Positions 154–156 (KDQ) are interaction with tRNA. Cys204 serves as the catalytic Cysteine persulfide intermediate. Residues 316-317 (RY) form an interaction with tRNA region.

It belongs to the MnmA/TRMU family.

It localises to the cytoplasm. The catalysed reaction is S-sulfanyl-L-cysteinyl-[protein] + uridine(34) in tRNA + AH2 + ATP = 2-thiouridine(34) in tRNA + L-cysteinyl-[protein] + A + AMP + diphosphate + H(+). Its function is as follows. Catalyzes the 2-thiolation of uridine at the wobble position (U34) of tRNA, leading to the formation of s(2)U34. The protein is tRNA-specific 2-thiouridylase MnmA of Shewanella piezotolerans (strain WP3 / JCM 13877).